The following is a 364-amino-acid chain: Mitoferrin-2 (364 aa).

Residues 1 to 17 are compositionally biased toward gly residues; it reads MELEGRGAGGVAGGPAA. Disordered regions lie at residues 1 to 28 and 40 to 60; these read MELE…ESAL and GAGG…PDSG. Low complexity predominate over residues 18-27; it reads GPGRSPGESA. Solcar repeat units lie at residues 70–158, 168–252, and 259–352; these read ATVT…LKKT, NSHI…LQEH, and YNPS…FKYL. Helical transmembrane passes span 72 to 91, 133 to 152, 170 to 189, 227 to 246, 261 to 280, and 327 to 346; these read VTTH…CVMY, GLNV…FACY, HIAN…AAMN, SYTT…FMTY, PSSH…AATT, and GVQA…WSVY.

This sequence belongs to the mitochondrial carrier (TC 2.A.29) family. As to expression, ubiquitous. Expressed in placenta, lung, kidney, pancreas, liver, brain, skeletal muscle and heart.

It is found in the mitochondrion inner membrane. It carries out the reaction Fe(2+)(in) = Fe(2+)(out). In terms of biological role, mitochondrial iron transporter that mediates iron uptake. Probably required for heme synthesis of hemoproteins and Fe-S cluster assembly in non-erythroid cells. The chain is Mitoferrin-2 (SLC25A28) from Homo sapiens (Human).